Consider the following 530-residue polypeptide: Carbohydrate sulfotransferase 2 (530 aa).

Residues 1-54 are Cytoplasmic-facing; the sequence is MSRSPQRALPPGALPRLLQAAPAAAPRALLPQWPRRPGRRWPASPLGMKVFRRK. The chain crosses the membrane as a helical; Signal-anchor for type II membrane protein span at residues 55–75; that stretch reads ALVLCAGYALLLVLTMLNLLD. At 76-530 the chain is on the lumenal side; sequence YKWHKEPLQQ…SKTLLRKPRL (455 aa). Positions 89–119 are disordered; the sequence is DGPLGAAAGAAGGSWGRPGPPPAGPPRAHAR. 173–179 contributes to the 3'-phosphoadenylyl sulfate binding site; sequence WRSGSSF. A glycan (N-linked (GlcNAc...) asparagine) is linked at Asn-243. 332–340 is a 3'-phosphoadenylyl sulfate binding site; it reads RDPRAVASS. N-linked (GlcNAc...) asparagine glycans are attached at residues Asn-457 and Asn-475.

Belongs to the sulfotransferase 1 family. Gal/GlcNAc/GalNAc subfamily. As to quaternary structure, homodimer; disulfide-linked. Homodimerization is not essential for enzyme activity. In terms of processing, glycosylation at Asn-475 is required for catalytic activity. In terms of tissue distribution, widely expressed. Highly expressed in bone marrow, peripheral blood leukocytes, spleen, brain, spinal cord, ovary and placenta. Expressed by high endothelial cells (HEVs) and leukocytes.

It localises to the golgi apparatus. Its subcellular location is the trans-Golgi network membrane. It carries out the reaction 3-O-{N-acetyl-beta-D-glucosaminyl-(1-&gt;3)-beta-D-galactosyl-(1-&gt;3)-N-acetyl-alpha-D-galactosaminyl}-L-threonyl-[protein] + 3'-phosphoadenylyl sulfate = 3-O-{6-O-sulfo-N-acetyl-beta-D-glucosaminyl-(1-&gt;3)-beta-D-galactosyl-(1-&gt;3)-N-acetyl-alpha-D-galactosaminyl}-L-threonyl-[protein] + adenosine 3',5'-bisphosphate + H(+). The enzyme catalyses 3-O-{N-acetyl-beta-D-glucosaminyl-(1-&gt;3)-beta-D-galactosyl-(1-&gt;3)-N-acetyl-alpha-D-galactosaminyl}-L-seryl-[protein] + 3'-phosphoadenylyl sulfate = 3-O-{6-O-sulfo-N-acetyl-beta-D-glucosaminyl-(1-&gt;3)-beta-D-galactosyl-(1-&gt;3)-N-acetyl-alpha-D-galactosaminyl}-L-seryl-[protein] + adenosine 3',5'-bisphosphate + H(+). It catalyses the reaction a 3-O-{beta-D-galactosyl-(1-&gt;3)-[N-acetyl-beta-D-glucosaminyl-(1-&gt;6)]-N-acetyl-alpha-D-galactosaminyl}-L-threonyl-[protein] + 3'-phosphoadenylyl sulfate = 3-O-{beta-D-galactosyl-(1-&gt;3)-[6-O-sulfo-N-acetyl-beta-D-glucosaminyl-(1-&gt;6)]-N-acetyl-alpha-D-galactosaminyl}-L-threonyl-[protein] + adenosine 3',5'-bisphosphate + H(+). The catalysed reaction is 3-O-{beta-D-galactosyl-(1-&gt;3)-[N-acetyl-beta-D-glucosaminyl-(1-&gt;6)]-N-acetyl-alpha-D-galactosaminyl}-L-seryl-[protein] + 3'-phosphoadenylyl sulfate = 3-O-{beta-D-galactosyl-(1-&gt;3)-[6-O-sulfo-N-acetyl-beta-D-glucosaminyl-(1-&gt;6)]-N-acetyl-alpha-D-galactosaminyl}-L-seryl-[protein] + adenosine 3',5'-bisphosphate + H(+). It participates in protein modification; carbohydrate sulfation. Functionally, sulfotransferase that utilizes 3'-phospho-5'-adenylyl sulfate (PAPS) as sulfonate donor to catalyze the transfer of sulfate to position 6 of non-reducing N-acetylglucosamine (GlcNAc) residues within keratan-like structures on N-linked glycans and within mucin-associated glycans that can ultimately serve as SELL ligands. SELL ligands are present in high endothelial cells (HEVs) and play a central role in lymphocyte homing at sites of inflammation. Participates in biosynthesis of the SELL ligand sialyl 6-sulfo Lewis X and in lymphocyte homing to Peyer patches. Has no activity toward O-linked sugars. Its substrate specificity may be influenced by its subcellular location. Sulfates GlcNAc residues at terminal, non-reducing ends of oligosaccharide chains. The sequence is that of Carbohydrate sulfotransferase 2 (CHST2) from Homo sapiens (Human).